Consider the following 347-residue polypeptide: Protein RecA (347 aa).

Position 64 to 71 (64 to 71 (GPESSGKT)) interacts with ATP. The interval 328–347 (DKVDEDKTEEEASQESLDLK) is disordered.

The protein belongs to the RecA family.

The protein resides in the cytoplasm. In terms of biological role, can catalyze the hydrolysis of ATP in the presence of single-stranded DNA, the ATP-dependent uptake of single-stranded DNA by duplex DNA, and the ATP-dependent hybridization of homologous single-stranded DNAs. It interacts with LexA causing its activation and leading to its autocatalytic cleavage. The protein is Protein RecA of Oceanobacillus iheyensis (strain DSM 14371 / CIP 107618 / JCM 11309 / KCTC 3954 / HTE831).